The following is a 146-amino-acid chain: MSYCKIEAPYPTAEAGEKRIIFALDPKGDEAEQEQYMLQLIPGRVLEMSRNDAANHQTLGGSIEQHTVEGWGAKFFHVKLAKQAASTLMHVHDEDHSEKVRKFVAMPNPPLFPYRSRCPVVVYLPNDAELRYGIWCGGQQMQAVTE.

The protein belongs to the protease inhibitor I11 (ecotin) family.

This Leishmania infantum protein is Ecotin-like protein 1 (ISP1).